Here is a 681-residue protein sequence, read N- to C-terminus: uncharacterized protein (681 aa).

It belongs to the protein kinase superfamily. ADCK protein kinase family.

This is an uncharacterized protein from Synechocystis sp. (strain ATCC 27184 / PCC 6803 / Kazusa).